A 208-amino-acid chain; its full sequence is Urease accessory protein UreG (208 aa).

G10–T17 contacts GTP.

Belongs to the SIMIBI class G3E GTPase family. UreG subfamily. Homodimer. UreD, UreF and UreG form a complex that acts as a GTP-hydrolysis-dependent molecular chaperone, activating the urease apoprotein by helping to assemble the nickel containing metallocenter of UreC. The UreE protein probably delivers the nickel.

The protein resides in the cytoplasm. Its function is as follows. Facilitates the functional incorporation of the urease nickel metallocenter. This process requires GTP hydrolysis, probably effectuated by UreG. The sequence is that of Urease accessory protein UreG from Halalkalibacterium halodurans (strain ATCC BAA-125 / DSM 18197 / FERM 7344 / JCM 9153 / C-125) (Bacillus halodurans).